The primary structure comprises 512 residues: Probable malate:quinone oxidoreductase (512 aa).

It belongs to the MQO family. FAD serves as cofactor.

The catalysed reaction is (S)-malate + a quinone = a quinol + oxaloacetate. It participates in carbohydrate metabolism; tricarboxylic acid cycle; oxaloacetate from (S)-malate (quinone route): step 1/1. In Rhodococcus erythropolis (strain PR4 / NBRC 100887), this protein is Probable malate:quinone oxidoreductase.